Here is a 523-residue protein sequence, read N- to C-terminus: 2-isopropylmalate synthase (523 aa).

Residues 5–267 (VVIFDTTLRD…QTRINHNEIW (263 aa)) enclose the Pyruvate carboxyltransferase domain. Positions 14, 202, 204, and 238 each coordinate Mn(2+). The tract at residues 392 to 523 (RMDYFSVQSG…QNKENNKETV (132 aa)) is regulatory domain.

It belongs to the alpha-IPM synthase/homocitrate synthase family. LeuA type 1 subfamily. As to quaternary structure, homodimer. It depends on Mn(2+) as a cofactor.

It localises to the cytoplasm. The catalysed reaction is 3-methyl-2-oxobutanoate + acetyl-CoA + H2O = (2S)-2-isopropylmalate + CoA + H(+). It participates in amino-acid biosynthesis; L-leucine biosynthesis; L-leucine from 3-methyl-2-oxobutanoate: step 1/4. Its function is as follows. Catalyzes the condensation of the acetyl group of acetyl-CoA with 3-methyl-2-oxobutanoate (2-ketoisovalerate) to form 3-carboxy-3-hydroxy-4-methylpentanoate (2-isopropylmalate). The sequence is that of 2-isopropylmalate synthase from Enterobacter sp. (strain 638).